The following is a 296-amino-acid chain: Phosphoribosylaminoimidazole-succinocarboxamide synthase (296 aa).

It belongs to the SAICAR synthetase family.

The catalysed reaction is 5-amino-1-(5-phospho-D-ribosyl)imidazole-4-carboxylate + L-aspartate + ATP = (2S)-2-[5-amino-1-(5-phospho-beta-D-ribosyl)imidazole-4-carboxamido]succinate + ADP + phosphate + 2 H(+). Its pathway is purine metabolism; IMP biosynthesis via de novo pathway; 5-amino-1-(5-phospho-D-ribosyl)imidazole-4-carboxamide from 5-amino-1-(5-phospho-D-ribosyl)imidazole-4-carboxylate: step 1/2. This chain is Phosphoribosylaminoimidazole-succinocarboxamide synthase, found in Citrifermentans bemidjiense (strain ATCC BAA-1014 / DSM 16622 / JCM 12645 / Bem) (Geobacter bemidjiensis).